The chain runs to 61 residues: Small ribosomal subunit protein uS14 (61 aa).

C24, C27, C40, and C43 together coordinate Zn(2+).

Belongs to the universal ribosomal protein uS14 family. Zinc-binding uS14 subfamily. In terms of assembly, part of the 30S ribosomal subunit. Contacts proteins S3 and S10. Zn(2+) is required as a cofactor.

Its function is as follows. Binds 16S rRNA, required for the assembly of 30S particles and may also be responsible for determining the conformation of the 16S rRNA at the A site. This Streptococcus equi subsp. zooepidemicus (strain H70) protein is Small ribosomal subunit protein uS14.